A 209-amino-acid polypeptide reads, in one-letter code: Large ribosomal subunit protein uL3 (209 aa).

The tract at residues 127–147 (YSRGPMGHGSKSHRVAGARSA) is disordered.

The protein belongs to the universal ribosomal protein uL3 family. Part of the 50S ribosomal subunit. Forms a cluster with proteins L14 and L19.

In terms of biological role, one of the primary rRNA binding proteins, it binds directly near the 3'-end of the 23S rRNA, where it nucleates assembly of the 50S subunit. The chain is Large ribosomal subunit protein uL3 from Finegoldia magna (strain ATCC 29328 / DSM 20472 / WAL 2508) (Peptostreptococcus magnus).